The primary structure comprises 328 residues: Phosphatidate cytidylyltransferase (328 aa).

The span at 15-29 (SGRSATKSVTTNDAG) shows a compositional bias: polar residues. The tract at residues 15-50 (SGRSATKSVTTNDAGTGNPAEQPARGAKQQPATETS) is disordered. The next 7 membrane-spanning stretches (helical) occupy residues 58-78 (AAIV…VFVP), 103-123 (AGYL…VWLT), 124-144 (WPFG…VCMI), 173-193 (ATVF…MLVY), 202-222 (FCMM…GVLF), 239-259 (GFAG…TFLV), and 263-283 (PWIG…GDLV).

This sequence belongs to the CDS family.

The protein resides in the cell membrane. The catalysed reaction is a 1,2-diacyl-sn-glycero-3-phosphate + CTP + H(+) = a CDP-1,2-diacyl-sn-glycerol + diphosphate. It functions in the pathway phospholipid metabolism; CDP-diacylglycerol biosynthesis; CDP-diacylglycerol from sn-glycerol 3-phosphate: step 3/3. The protein is Phosphatidate cytidylyltransferase (cdsA) of Mycobacterium tuberculosis (strain CDC 1551 / Oshkosh).